The sequence spans 299 residues: MKHIISAYNFSRDELEDIFALTDKYSKNLNDTRKILSGKTISIAFFEPSTRTYLSFQKAIINLGGDVIGFSGEESTSVAKGENLADTIRMLNNYSDGIVMRHKYDGASRFASEISDIPVINAGDGKHEHPTQAVIDIYTINKHFNTIDGLVFALLGDLKYARTVNSLLRILTRFRPKLVYLISPQLLRARKEILDELNYPVKEVENPFEVINEVDVLYVTRIQKERFVDEMEYEKIKGSYIVSLDLANKMKKDSIILHPLPRVNEIDRKVDKTTKAKYFEQASYGVPVRMSILTKIYGE.

The carbamoyl phosphate site is built by Arg-51 and Thr-52. Lys-80 contributes to the L-aspartate binding site. The carbamoyl phosphate site is built by Arg-101, His-129, and Gln-132. Positions 162 and 221 each coordinate L-aspartate. Carbamoyl phosphate contacts are provided by Leu-260 and Pro-261.

The protein belongs to the aspartate/ornithine carbamoyltransferase superfamily. ATCase family. In terms of assembly, heterooligomer of catalytic and regulatory chains.

It catalyses the reaction carbamoyl phosphate + L-aspartate = N-carbamoyl-L-aspartate + phosphate + H(+). It functions in the pathway pyrimidine metabolism; UMP biosynthesis via de novo pathway; (S)-dihydroorotate from bicarbonate: step 2/3. Its function is as follows. Catalyzes the condensation of carbamoyl phosphate and aspartate to form carbamoyl aspartate and inorganic phosphate, the committed step in the de novo pyrimidine nucleotide biosynthesis pathway. The sequence is that of Aspartate carbamoyltransferase catalytic subunit from Sulfolobus acidocaldarius (strain ATCC 33909 / DSM 639 / JCM 8929 / NBRC 15157 / NCIMB 11770).